Here is a 335-residue protein sequence, read N- to C-terminus: MAKAKIAVNGYGTIGKRVADAVKAQDDMEVVGISKRTPNYEAAVAHQLGYDIYAPAENVGAFEKAGMPAAGSVEEMIEKADLVVDCTPGGVGEKNKPLYEKAGVKAIWQGGESHPIAGFSFNAVSNYEGALGRDLVRVVSCNTTGLCRTITPIDRELGVKKVRAILARRATDPNDIKKGPINAIVLHPVKLPSHHGPDVRSVIPHINITSAALLVPTTLMHLHTVNMEVDTDCTAEDIKKIFSSQSRIRFIGQGITSTAEIMEVARDIKRPRNDMWENCIWPESITVDEKEFYFFQAIHQESIVVPENVDAIRAMMELESDGAKSIEKTNKALGM.

Residues Thr-13–Ile-14 and Gly-111 contribute to the NAD(+) site. Ser-140–Asn-142 is a binding site for D-glyceraldehyde 3-phosphate. Cys-141 (nucleophile) is an active-site residue. Arg-169 provides a ligand contact to NAD(+). D-glyceraldehyde 3-phosphate contacts are provided by residues Thr-171 and His-195–Gly-196. An NAD(+)-binding site is contributed by Gln-300.

The protein belongs to the glyceraldehyde-3-phosphate dehydrogenase family. Homotetramer.

Its subcellular location is the cytoplasm. It catalyses the reaction D-glyceraldehyde 3-phosphate + phosphate + NADP(+) = (2R)-3-phospho-glyceroyl phosphate + NADPH + H(+). The enzyme catalyses D-glyceraldehyde 3-phosphate + phosphate + NAD(+) = (2R)-3-phospho-glyceroyl phosphate + NADH + H(+). Its pathway is carbohydrate degradation; glycolysis; pyruvate from D-glyceraldehyde 3-phosphate: step 1/5. This is Glyceraldehyde-3-phosphate dehydrogenase 1 (gapA) from Methanosarcina acetivorans (strain ATCC 35395 / DSM 2834 / JCM 12185 / C2A).